The following is a 277-amino-acid chain: NLP effector protein Pc109174 (277 aa).

The signal sequence occupies residues 1–19; that stretch reads MNLVPALVLLLALAQTVLG. The short motif at 119 to 125 is the Hepta-peptide GHRHDWE motif element; sequence KSRHLWA. N-linked (GlcNAc...) asparagine glycosylation occurs at N199.

This sequence belongs to the Necrosis inducing protein (NPP1) family.

It localises to the secreted. Its function is as follows. Secreted effector that contributes strongly to virulence during infection by P.capsici. Induces cell death in the Solanaceae, including hot pepper. The protein is NLP effector protein Pc109174 of Phytophthora capsici.